We begin with the raw amino-acid sequence, 229 residues long: Cytochrome c oxidase subunit 2 (229 aa).

Topologically, residues 1–26 are mitochondrial intermembrane; it reads MANWTQLGLQDASSPLMEELIYFHDY. Residues 27-48 form a helical membrane-spanning segment; sequence TLIILTLITILVFYGLASLLFS. Residues 49 to 62 lie on the Mitochondrial matrix side of the membrane; that stretch reads SNTNRFFLEGQGLE. Residues 63–82 traverse the membrane as a helical segment; it reads TVWTIIPAVILIFIALPSLQ. Residues 83–229 are Mitochondrial intermembrane-facing; that stretch reads LLYLMDEVNN…ETWVSNFITE (147 aa). 6 residues coordinate Cu cation: H161, C196, E198, C200, H204, and M207. E198 serves as a coordination point for Mg(2+).

Belongs to the cytochrome c oxidase subunit 2 family. As to quaternary structure, component of the cytochrome c oxidase (complex IV, CIV), a multisubunit enzyme composed of a catalytic core of 3 subunits and several supernumerary subunits. The complex exists as a monomer or a dimer and forms supercomplexes (SCs) in the inner mitochondrial membrane with ubiquinol-cytochrome c oxidoreductase (cytochrome b-c1 complex, complex III, CIII). Cu cation is required as a cofactor.

Its subcellular location is the mitochondrion inner membrane. The enzyme catalyses 4 Fe(II)-[cytochrome c] + O2 + 8 H(+)(in) = 4 Fe(III)-[cytochrome c] + 2 H2O + 4 H(+)(out). Component of the cytochrome c oxidase, the last enzyme in the mitochondrial electron transport chain which drives oxidative phosphorylation. The respiratory chain contains 3 multisubunit complexes succinate dehydrogenase (complex II, CII), ubiquinol-cytochrome c oxidoreductase (cytochrome b-c1 complex, complex III, CIII) and cytochrome c oxidase (complex IV, CIV), that cooperate to transfer electrons derived from NADH and succinate to molecular oxygen, creating an electrochemical gradient over the inner membrane that drives transmembrane transport and the ATP synthase. Cytochrome c oxidase is the component of the respiratory chain that catalyzes the reduction of oxygen to water. Electrons originating from reduced cytochrome c in the intermembrane space (IMS) are transferred via the dinuclear copper A center (CU(A)) of subunit 2 and heme A of subunit 1 to the active site in subunit 1, a binuclear center (BNC) formed by heme A3 and copper B (CU(B)). The BNC reduces molecular oxygen to 2 water molecules using 4 electrons from cytochrome c in the IMS and 4 protons from the mitochondrial matrix. The chain is Cytochrome c oxidase subunit 2 (COII) from Patiria pectinifera (Starfish).